The following is a 199-amino-acid chain: Fe/S biogenesis protein NfuA (199 aa).

Residues Cys151 and Cys154 each contribute to the [4Fe-4S] cluster site.

The protein belongs to the NfuA family. As to quaternary structure, homodimer. The cofactor is [4Fe-4S] cluster.

Its function is as follows. Involved in iron-sulfur cluster biogenesis. Binds a 4Fe-4S cluster, can transfer this cluster to apoproteins, and thereby intervenes in the maturation of Fe/S proteins. Could also act as a scaffold/chaperone for damaged Fe/S proteins. This chain is Fe/S biogenesis protein NfuA, found in Xanthomonas campestris pv. campestris (strain 8004).